A 187-amino-acid chain; its full sequence is MNLTNHFLVAMPGMKDPYFQNSVIYLCEHNDEGAMGLMINAPIDVTVGSMLKQVEVDSEQPKPNQASLDKPVLNGGPVAEDRGFILHKPKGSYQSSINMTDQISVTTSKDILMVLGTEDEPMHYLVALGYAGWEPGQLEIELTENSWLTVEADPKVIFNTPISDRWKVAVQMLGINAAQLSADAGHA.

Belongs to the UPF0301 (AlgH) family.

This Vibrio atlanticus (strain LGP32) (Vibrio splendidus (strain Mel32)) protein is UPF0301 protein VS_2679.